Here is a 371-residue protein sequence, read N- to C-terminus: tRNA-specific 2-thiouridylase MnmA (371 aa).

ATP-binding positions include Gly-13–Ser-20 and Met-39. The segment at Asn-99–Asp-101 is interaction with target base in tRNA. Cys-104 acts as the Nucleophile in catalysis. A disulfide bridge connects residues Cys-104 and Cys-200. Gly-128 is an ATP binding site. The segment at Lys-150–Gln-152 is interaction with tRNA. Residue Cys-200 is the Cysteine persulfide intermediate of the active site. Residues Arg-308 to Tyr-309 are interaction with tRNA.

The protein belongs to the MnmA/TRMU family.

It is found in the cytoplasm. The enzyme catalyses S-sulfanyl-L-cysteinyl-[protein] + uridine(34) in tRNA + AH2 + ATP = 2-thiouridine(34) in tRNA + L-cysteinyl-[protein] + A + AMP + diphosphate + H(+). Its function is as follows. Catalyzes the 2-thiolation of uridine at the wobble position (U34) of tRNA, leading to the formation of s(2)U34. This is tRNA-specific 2-thiouridylase MnmA from Bacillus thuringiensis (strain Al Hakam).